The following is a 283-amino-acid chain: Bifunctional protein FolD (283 aa).

166-168 (GAS) is a binding site for NADP(+).

Belongs to the tetrahydrofolate dehydrogenase/cyclohydrolase family. Homodimer.

It catalyses the reaction (6R)-5,10-methylene-5,6,7,8-tetrahydrofolate + NADP(+) = (6R)-5,10-methenyltetrahydrofolate + NADPH. The enzyme catalyses (6R)-5,10-methenyltetrahydrofolate + H2O = (6R)-10-formyltetrahydrofolate + H(+). It participates in one-carbon metabolism; tetrahydrofolate interconversion. Functionally, catalyzes the oxidation of 5,10-methylenetetrahydrofolate to 5,10-methenyltetrahydrofolate and then the hydrolysis of 5,10-methenyltetrahydrofolate to 10-formyltetrahydrofolate. The protein is Bifunctional protein FolD of Coxiella burnetii (strain Dugway 5J108-111).